A 397-amino-acid polypeptide reads, in one-letter code: Elongation factor Tu (397 aa).

The region spanning 10–206 is the tr-type G domain; sequence KPHVNIGTIG…ACDDYIPEPV (197 aa). The G1 stretch occupies residues 19-26; the sequence is GHIDHGKT. GTP is bound at residue 19-26; that stretch reads GHIDHGKT. Mg(2+) is bound at residue threonine 26. The tract at residues 62–66 is G2; sequence GITIS. The tract at residues 83 to 86 is G3; it reads DCPG. Residues 83-87 and 138-141 each bind GTP; these read DCPGH and NKAD. The tract at residues 138–141 is G4; the sequence is NKAD. Positions 176–178 are G5; it reads SAL.

This sequence belongs to the TRAFAC class translation factor GTPase superfamily. Classic translation factor GTPase family. EF-Tu/EF-1A subfamily. As to quaternary structure, monomer.

It is found in the cytoplasm. The catalysed reaction is GTP + H2O = GDP + phosphate + H(+). Its function is as follows. GTP hydrolase that promotes the GTP-dependent binding of aminoacyl-tRNA to the A-site of ribosomes during protein biosynthesis. This Acidothermus cellulolyticus (strain ATCC 43068 / DSM 8971 / 11B) protein is Elongation factor Tu.